Reading from the N-terminus, the 1104-residue chain is Mitogen-activated protein kinase kinase kinase 9 (1104 aa).

The span at 12 to 22 (ASAAAAAPPGE) shows a compositional bias: low complexity. The segment at 12–47 (ASAAAAAPPGEDGAGAGAEEEEEEEEEAAAAVGPGE) is disordered. A compositionally biased stretch (acidic residues) spans 29–39 (AEEEEEEEEEA). One can recognise an SH3 domain in the interval 52-116 (APLPYWTAVF…PSNYVTPRSA (65 aa)). A Protein kinase domain is found at 144-412 (LTLEEIIGIG…LTTIEESGFF (269 aa)). Residues 150–158 (IGIGGFGKV) and Lys171 each bind ATP. Asp268 acts as the Proton acceptor in catalysis. Thr304 and Thr305 each carry phosphothreonine; by autocatalysis. Ser308 carries the phosphoserine; by autocatalysis modification. Thr312 is subject to Phosphothreonine; by autocatalysis. Leucine-zipper stretches follow at residues 430–451 (IQEM…EEEL) and 465–486 (LRRR…ELNI). 4 disordered regions span residues 532–636 (ASPT…PHFH), 675–742 (MEDE…LKRG), 781–819 (EEPE…FKKE), and 890–1038 (RDPN…CFAS). Ser533 is subject to Phosphoserine. Polar residues-rich tracts occupy residues 566–575 (PGESSKTWGR) and 723–739 (PVNS…TNSL). The span at 785–797 (PPAREEKKRREGL) shows a compositional bias: basic and acidic residues. Polar residues predominate over residues 893-910 (NQSLTPTHVTLTTPSQPS). The segment covering 929–944 (SRSPSSNGLSPSPGAG) has biased composition (low complexity). The segment covering 1014-1038 (HARSTSPANSSSTETPSNLDSCFAS) has biased composition (polar residues).

The protein belongs to the protein kinase superfamily. STE Ser/Thr protein kinase family. MAP kinase kinase kinase subfamily. Homodimer. Requires Mg(2+) as cofactor. In terms of processing, autophosphorylation on serine and threonine residues within the activation loop plays a role in enzyme activation. Thr-312 is likely to be the main autophosphorylation site. Autophosphorylation also occurs on Thr-304 and Ser-308. As to expression, expressed in epithelial tumor cell lines of colonic, breast and esophageal origin.

It catalyses the reaction L-seryl-[protein] + ATP = O-phospho-L-seryl-[protein] + ADP + H(+). It carries out the reaction L-threonyl-[protein] + ATP = O-phospho-L-threonyl-[protein] + ADP + H(+). Homodimerization via the leucine zipper domains is required for autophosphorylation of multiple sites in the activation loop and subsequent activation. Autophosphorylation at Thr-312 is the key step in activation of MAP3K9/MLK1 and is required for full phosphorylation. Autophosphorylation at Thr-304 and Ser-308 have been shown to be of secondary importance in the activation of MAP3K9/MLK1. CEP-1347 and many indolocarbazole analogs have been shown to act as inhibitors of MAP3K9/MLK1 activity. Functionally, serine/threonine kinase which acts as an essential component of the MAP kinase signal transduction pathway. Plays an important role in the cascades of cellular responses evoked by changes in the environment. Once activated, acts as an upstream activator of the MKK/JNK signal transduction cascade through the phosphorylation of MAP2K4/MKK4 and MAP2K7/MKK7 which in turn activate the JNKs. The MKK/JNK signaling pathway regulates stress response via activator protein-1 (JUN) and GATA4 transcription factors. Also plays a role in mitochondrial death signaling pathway, including the release cytochrome c, leading to apoptosis. The protein is Mitogen-activated protein kinase kinase kinase 9 (MAP3K9) of Homo sapiens (Human).